Reading from the N-terminus, the 1060-residue chain is Carbamoyl phosphate synthase large chain (1060 aa).

Residues 1-401 (MPKRTDIRKI…SLLKACRSLE (401 aa)) form a carboxyphosphate synthetic domain region. Residues R129, R169, G175, G176, R208, I210, E215, G241, I242, H243, Q284, and E298 each contribute to the ATP site. Positions 133–327 (KQLMEELNQP…IAKLAAKIAV (195 aa)) constitute an ATP-grasp 1 domain. Residues Q284, E298, and N300 each coordinate Mg(2+). Residues Q284, E298, and N300 each contribute to the Mn(2+) site. The interval 402-546 (IGVDHIKIAD…YSTYAVENES (145 aa)) is oligomerization domain. The interval 547 to 929 (LISDKASILV…ALYKAFEAAY (383 aa)) is carbamoyl phosphate synthetic domain. The ATP-grasp 2 domain occupies 671–861 (EATLQALNIP…MAQVATKVIL (191 aa)). ATP-binding residues include R707, A746, L748, E752, G777, V778, H779, S780, Q820, and E832. Mg(2+) contacts are provided by Q820, E832, and N834. Mn(2+) is bound by residues Q820, E832, and N834. In terms of domain architecture, MGS-like spans 930–1060 (LHMPDYGNIV…SRAFTLKVLD (131 aa)). Positions 930–1060 (LHMPDYGNIV…SRAFTLKVLD (131 aa)) are allosteric domain.

The protein belongs to the CarB family. As to quaternary structure, composed of two chains; the small (or glutamine) chain promotes the hydrolysis of glutamine to ammonia, which is used by the large (or ammonia) chain to synthesize carbamoyl phosphate. Tetramer of heterodimers (alpha,beta)4. It depends on Mg(2+) as a cofactor. Mn(2+) is required as a cofactor.

The enzyme catalyses hydrogencarbonate + L-glutamine + 2 ATP + H2O = carbamoyl phosphate + L-glutamate + 2 ADP + phosphate + 2 H(+). It catalyses the reaction hydrogencarbonate + NH4(+) + 2 ATP = carbamoyl phosphate + 2 ADP + phosphate + 2 H(+). It functions in the pathway amino-acid biosynthesis; L-arginine biosynthesis; carbamoyl phosphate from bicarbonate: step 1/1. Its pathway is pyrimidine metabolism; UMP biosynthesis via de novo pathway; (S)-dihydroorotate from bicarbonate: step 1/3. Functionally, large subunit of the glutamine-dependent carbamoyl phosphate synthetase (CPSase). CPSase catalyzes the formation of carbamoyl phosphate from the ammonia moiety of glutamine, carbonate, and phosphate donated by ATP, constituting the first step of 2 biosynthetic pathways, one leading to arginine and/or urea and the other to pyrimidine nucleotides. The large subunit (synthetase) binds the substrates ammonia (free or transferred from glutamine from the small subunit), hydrogencarbonate and ATP and carries out an ATP-coupled ligase reaction, activating hydrogencarbonate by forming carboxy phosphate which reacts with ammonia to form carbamoyl phosphate. The protein is Carbamoyl phosphate synthase large chain of Streptococcus agalactiae serotype V (strain ATCC BAA-611 / 2603 V/R).